We begin with the raw amino-acid sequence, 413 residues long: Ras association domain-containing protein 5 (413 aa).

The interval 1-105 (MASPAIGQRP…RDVRSIFEQP (105 aa)) is disordered. Residues 61-74 (ARGDPEPTPRDCRH) show a composition bias toward basic and acidic residues. The Phorbol-ester/DAG-type zinc-finger motif lies at 117 to 165 (GHRFAELALRGGPGWCDLCGREVLRQALRCANCKFTCHPECRSLIQLDC). Phosphoserine occurs at positions 177 and 274. The Ras-associating domain maps to 265-359 (PAATTDKRTS…LSFVLKENET (95 aa)). Thr-347 carries the post-translational modification Phosphothreonine. The SARAH domain occupies 361–408 (DVEWDAFSIPELQNFLTILEKEEQDKIHQLQKKYNKFRQKLEEALRES).

Interacts directly with activated HRAS; a RASSF5-STK4/MST1 complex probably associates with activated HRAS. Interacts with KRAS. Probably interacts with Ras-like GTPases RRAS, MRAS, RAP1B, RAP2A and RALA. Interacts with RRAS2. Can self-associate. Interacts with RSSF1 isoform A. The RSSF1 isoform A-RSSF5 heterodimer probably mediates the association of RSSF1 with HRAS. Isoform 2 interacts with activated RAP1A and ITGAL/LFA-1. Binds STK4/MST1, inhibiting STK4/MST1 autoactivation.

The protein resides in the cytoplasm. It is found in the cytoskeleton. Its function is as follows. Potential tumor suppressor. Seems to be involved in lymphocyte adhesion by linking RAP1A activation upon T-cell receptor or chemokine stimulation to integrin activation. Stimulates lymphocyte polarization and the patch-like distribution of ITGAL/LFA-1, resulting in an enhanced adhesion to ICAM1. Together with RAP1A may participate in regulation of microtubule growth. The association with activated RAP1A is required for directional movement of endothelial cells during wound healing. May be involved in regulation of Ras apoptotic function. The RASSF5-STK4/MST1 complex may mediate HRAS and KRAS induced apoptosis. This chain is Ras association domain-containing protein 5 (Rassf5), found in Rattus norvegicus (Rat).